Here is a 124-residue protein sequence, read N- to C-terminus: Small ribosomal subunit protein uS12 (124 aa).

D89 bears the 3-methylthioaspartic acid mark.

This sequence belongs to the universal ribosomal protein uS12 family. As to quaternary structure, part of the 30S ribosomal subunit. Contacts proteins S8 and S17. May interact with IF1 in the 30S initiation complex.

In terms of biological role, with S4 and S5 plays an important role in translational accuracy. Interacts with and stabilizes bases of the 16S rRNA that are involved in tRNA selection in the A site and with the mRNA backbone. Located at the interface of the 30S and 50S subunits, it traverses the body of the 30S subunit contacting proteins on the other side and probably holding the rRNA structure together. The combined cluster of proteins S8, S12 and S17 appears to hold together the shoulder and platform of the 30S subunit. The polypeptide is Small ribosomal subunit protein uS12 (Haemophilus ducreyi (strain 35000HP / ATCC 700724)).